A 156-amino-acid polypeptide reads, in one-letter code: Small ribosomal subunit protein uS7 (156 aa).

It belongs to the universal ribosomal protein uS7 family. In terms of assembly, part of the 30S ribosomal subunit. Contacts proteins S9 and S11.

In terms of biological role, one of the primary rRNA binding proteins, it binds directly to 16S rRNA where it nucleates assembly of the head domain of the 30S subunit. Is located at the subunit interface close to the decoding center, probably blocks exit of the E-site tRNA. This Dehalococcoides mccartyi (strain ATCC BAA-2266 / KCTC 15142 / 195) (Dehalococcoides ethenogenes (strain 195)) protein is Small ribosomal subunit protein uS7.